A 560-amino-acid chain; its full sequence is Glutamate--tRNA ligase (560 aa).

Positions 108–118 (PNPSGPLHLGH) match the 'HIGH' region motif.

Belongs to the class-I aminoacyl-tRNA synthetase family. Glutamate--tRNA ligase type 2 subfamily.

It is found in the cytoplasm. It carries out the reaction tRNA(Glu) + L-glutamate + ATP = L-glutamyl-tRNA(Glu) + AMP + diphosphate. In terms of biological role, catalyzes the attachment of glutamate to tRNA(Glu) in a two-step reaction: glutamate is first activated by ATP to form Glu-AMP and then transferred to the acceptor end of tRNA(Glu). In Methanocorpusculum labreanum (strain ATCC 43576 / DSM 4855 / Z), this protein is Glutamate--tRNA ligase.